Here is a 1448-residue protein sequence, read N- to C-terminus: Gag-Pol polyprotein (1448 aa).

G2 carries N-myristoyl glycine; by host lipidation. The Nuclear export signal motif lies at 16–22 (LEKIRLR). The Nuclear localization signal motif lies at 26-32 (KKKYMLK). The segment covering 218–227 (HPQQAPQQGQ) has biased composition (low complexity). A disordered region spans residues 218 to 237 (HPQQAPQQGQLREPSGSDIA). CCHC-type zinc fingers lie at residues 391–408 (IKCW…QCRA) and 412–429 (QGCW…KCPN). The interval 440–461 (LGKEAPQFPHGSSASGADANCS) is disordered. In terms of domain architecture, Peptidase A2 spans 517 to 586 (VEVLLDTGAD…TPINIFGRNL (70 aa)). Catalysis depends on D522, which acts as the For protease activity; shared with dimeric partner. The 191-residue stretch at 640–830 (DGQLEEAPPT…PPFQWMGYEL (191 aa)) folds into the Reverse transcriptase domain. 3 residues coordinate Mg(2+): D706, D781, and D782. The tract at residues 823-831 (FQWMGYELW) is RT 'primer grip'. The short motif at 993–1009 (WEQWWTDYWQVTWIPEW) is the Tryptophan repeat motif element. Positions 1029–1152 (IEGEETYYVD…IDHLVSQGIR (124 aa)) constitute an RNase H type-1 domain. Residues D1038, E1073, D1093, and D1144 each coordinate Mg(2+). Residues 1158-1199 (EKIEPAQEEHSKYHSNIKELVFKFGLPRLVAKQIVDTCDKCH) form an Integrase-type zinc finger. The Zn(2+) site is built by H1167, H1171, C1195, and C1198. An Integrase catalytic domain is found at 1209 to 1359 (VNSDLGTWQM…TPAERLINMI (151 aa)). Residues D1219 and D1271 each contribute to the Mg(2+) site. The segment at residues 1378 to 1425 (FRVYYREGRDQLWKGPGELLWKGEGAVILKVGTDIKVVPRRKAKIIKD) is a DNA-binding region (integrase-type). The segment at 1426–1448 (YGGGKEMDSSSHMEDTGEAREVA) is disordered.

As to quaternary structure, homotrimer. Interacts with gp41 (via C-terminus). In terms of assembly, homodimer. The active site consists of two apposed aspartic acid residues. Heterodimer of p66 RT and p51 RT (RT p66/p51). Heterodimerization of RT is essential for DNA polymerase activity. Despite the sequence identities, p66 RT and p51 RT have distinct folding. As to quaternary structure, homotetramer; may further associate as a homohexadecamer. Requires Mg(2+) as cofactor. In terms of processing, specific enzymatic cleavages by the viral protease yield mature proteins. The protease is released by autocatalytic cleavage. The polyprotein is cleaved during and after budding, this process is termed maturation. Proteolytic cleavage of p66 RT removes the RNase H domain to yield the p51 RT subunit. Capsid protein p24 is phosphorylated.

Its subcellular location is the virion. The protein localises to the host nucleus. The protein resides in the host cytoplasm. It is found in the host cell membrane. The enzyme catalyses Specific for a P1 residue that is hydrophobic, and P1' variable, but often Pro.. It carries out the reaction Endohydrolysis of RNA in RNA/DNA hybrids. Three different cleavage modes: 1. sequence-specific internal cleavage of RNA. Human immunodeficiency virus type 1 and Moloney murine leukemia virus enzymes prefer to cleave the RNA strand one nucleotide away from the RNA-DNA junction. 2. RNA 5'-end directed cleavage 13-19 nucleotides from the RNA end. 3. DNA 3'-end directed cleavage 15-20 nucleotides away from the primer terminus.. It catalyses the reaction 3'-end directed exonucleolytic cleavage of viral RNA-DNA hybrid.. The catalysed reaction is DNA(n) + a 2'-deoxyribonucleoside 5'-triphosphate = DNA(n+1) + diphosphate. Its activity is regulated as follows. The viral protease is inhibited by many synthetic protease inhibitors (PIs), such as amprenavir, atazanavir, indinavir, loprinavir, nelfinavir, ritonavir and saquinavir. RT can be inhibited either by nucleoside RT inhibitors (NRTIs) or by non nucleoside RT inhibitors (NNRTIs). NRTIs act as chain terminators, whereas NNRTIs inhibit DNA polymerization by binding a small hydrophobic pocket near the RT active site and inducing an allosteric change in this region. Classical NRTIs are abacavir, adefovir (PMEA), didanosine (ddI), lamivudine (3TC), stavudine (d4T), tenofovir (PMPA), zalcitabine (ddC), and zidovudine (AZT). Classical NNRTIs are atevirdine (BHAP U-87201E), delavirdine, efavirenz (DMP-266), emivirine (I-EBU), and nevirapine (BI-RG-587). The tritherapies used as a basic effective treatment of AIDS associate two NRTIs and one NNRTI. Use of protease inhibitors in tritherapy regimens permit more ambitious therapeutic strategies. Its function is as follows. Gag-Pol polyprotein and Gag polyprotein may regulate their own translation, by the binding genomic RNA in the 5'-UTR. At low concentration, Gag-Pol and Gag would promote translation, whereas at high concentration, the polyproteins encapsidate genomic RNA and then shut off translation. In terms of biological role, matrix protein p17 has two main functions: in infected cell, it targets Gag and Gag-pol polyproteins to the plasma membrane via a multipartite membrane-binding signal, that includes its myristointegration complex. The myristoylation signal and the NLS exert conflicting influences its subcellular localization. The key regulation of these motifs might be phosphorylation of a portion of MA molecules on the C-terminal tyrosine at the time of virus maturation, by virion-associated cellular tyrosine kinase. Implicated in the release from host cell mediated by Vpu. Functionally, capsid protein p24 forms the conical core that encapsulates the genomic RNA-nucleocapsid complex in the virion. The core is constituted by capsid protein hexamer subunits. The core is disassembled soon after virion entry. Interaction with host PPIA/CYPA protects the virus from restriction by host TRIM5-alpha and from an unknown antiviral activity in host cells. This capsid restriction by TRIM5 is one of the factors which restricts SIV to the simian species. Nucleocapsid protein p7 encapsulates and protects viral dimeric unspliced (genomic) RNA. Binds these RNAs through its zinc fingers. Facilitates rearangement of nucleic acid secondary structure during retrotranscription of genomic RNA. This capability is referred to as nucleic acid chaperone activity. Its function is as follows. The aspartyl protease mediates proteolytic cleavages of Gag and Gag-Pol polyproteins during or shortly after the release of the virion from the plasma membrane. Cleavages take place as an ordered, step-wise cascade to yield mature proteins. This process is called maturation. Displays maximal activity during the budding process just prior to particle release from the cell. Also cleaves Nef and Vif, probably concomitantly with viral structural proteins on maturation of virus particles. Hydrolyzes host EIF4GI and PABP1 in order to shut off the capped cellular mRNA translation. The resulting inhibition of cellular protein synthesis serves to ensure maximal viral gene expression and to evade host immune response. In terms of biological role, reverse transcriptase/ribonuclease H (RT) is a multifunctional enzyme that converts the viral dimeric RNA genome into dsDNA in the cytoplasm, shortly after virus entry into the cell. This enzyme displays a DNA polymerase activity that can copy either DNA or RNA templates, and a ribonuclease H (RNase H) activity that cleaves the RNA strand of RNA-DNA heteroduplexes in a partially processive 3' to 5' endonucleasic mode. Conversion of viral genomic RNA into dsDNA requires many steps. A tRNA binds to the primer-binding site (PBS) situated at the 5'-end of the viral RNA. RT uses the 3' end of the tRNA primer to perform a short round of RNA-dependent minus-strand DNA synthesis. The reading proceeds through the U5 region and ends after the repeated (R) region which is present at both ends of viral RNA. The portion of the RNA-DNA heteroduplex is digested by the RNase H, resulting in a ssDNA product attached to the tRNA primer. This ssDNA/tRNA hybridizes with the identical R region situated at the 3' end of viral RNA. This template exchange, known as minus-strand DNA strong stop transfer, can be either intra- or intermolecular. RT uses the 3' end of this newly synthesized short ssDNA to perform the RNA-dependent minus-strand DNA synthesis of the whole template. RNase H digests the RNA template except for two polypurine tracts (PPTs) situated at the 5'-end and near the center of the genome. It is not clear if both polymerase and RNase H activities are simultaneous. RNase H can probably proceed both in a polymerase-dependent (RNA cut into small fragments by the same RT performing DNA synthesis) and a polymerase-independent mode (cleavage of remaining RNA fragments by free RTs). Secondly, RT performs DNA-directed plus-strand DNA synthesis using the PPTs that have not been removed by RNase H as primers. PPTs and tRNA primers are then removed by RNase H. The 3' and 5' ssDNA PBS regions hybridize to form a circular dsDNA intermediate. Strand displacement synthesis by RT to the PBS and PPT ends produces a blunt ended, linear dsDNA copy of the viral genome that includes long terminal repeats (LTRs) at both ends. Functionally, integrase catalyzes viral DNA integration into the host chromosome, by performing a series of DNA cutting and joining reactions. This enzyme activity takes place after virion entry into a cell and reverse transcription of the RNA genome in dsDNA. The first step in the integration process is 3' processing. This step requires a complex comprising the viral genome, matrix protein, Vpr and integrase. This complex is called the pre-integration complex (PIC). The integrase protein removes 2 nucleotides from each 3' end of the viral DNA, leaving recessed CA OH's at the 3' ends. In the second step, the PIC enters cell nucleus. This process is mediated through integrase and Vpr proteins, and allows the virus to infect a non dividing cell. This ability to enter the nucleus is specific of lentiviruses, other retroviruses cannot and rely on cell division to access cell chromosomes. In the third step, termed strand transfer, the integrase protein joins the previously processed 3' ends to the 5' ends of strands of target cellular DNA at the site of integration. The 5'-ends are produced by integrase-catalyzed staggered cuts, 5 bp apart. A Y-shaped, gapped, recombination intermediate results, with the 5'-ends of the viral DNA strands and the 3' ends of target DNA strands remaining unjoined, flanking a gap of 5 bp. The last step is viral DNA integration into host chromosome. This involves host DNA repair synthesis in which the 5 bp gaps between the unjoined strands are filled in and then ligated. Since this process occurs at both cuts flanking the SIV genome, a 5 bp duplication of host DNA is produced at the ends of SIV integration. Alternatively, Integrase may catalyze the excision of viral DNA just after strand transfer, this is termed disintegration. This is Gag-Pol polyprotein (gag-pol) from Cercopithecidae (Old World monkeys).